Reading from the N-terminus, the 667-residue chain is Receptor for retinol uptake STRA6 (667 aa).

Positions 1–13 (MSSQPAGNQTSPG) are enriched in polar residues. The segment at 1-22 (MSSQPAGNQTSPGPTEDYSYGS) is disordered. At 1–50 (MSSQPAGNQTSPGPTEDYSYGSWYIDEPQGGEELQPEGEVPSCHTSIPPS) the chain is on the extracellular side. N-linked (GlcNAc...) asparagine glycosylation is present at N8. A helical membrane pass occupies residues 51-71 (LYHACLASLSILVLLLLAMLV). Residues 72–98 (RRRQLWPDCVRGRPGLPSPVDFLAGDR) are Cytoplasmic-facing. Residues 99 to 119 (PQAVPAAVFVVLFSSLCLLLP) form a helical membrane-spanning segment. Residues 120-144 (DEDPLPFLTLASAPSQDGKTEAPRG) lie on the Extracellular side of the membrane. The helical transmembrane segment at 145 to 165 (AWKILGLFYYAALCYPLAACA) threads the bilayer. At 166–168 (TAG) the chain is on the cytoplasmic side. A helical membrane pass occupies residues 169–189 (HTAAHLLGSTLSWAHLGVQVW). The Extracellular portion of the chain corresponds to 190–205 (QRAECPQVPKIYKYYS). The helical transmembrane segment at 206-226 (LLASLPLLLGLGFLSLWYPVQ) threads the bilayer. At 227–295 (LVRSFSCRTG…PQPGFRLPLK (69 aa)) the chain is on the cytoplasmic side. Residues 235–293 (TGAGSKGLQSSYSEEYLRNLLCRKKLGSSSHTSKHGFLSWAWVCLRHCIYTPQPGFRLP) are interaction with RBP1. A helical transmembrane segment spans residues 296–316 (LVLSATLTGTAIYQVALLLLV). Topologically, residues 317–367 (GMVPNIQKVRAGVTTDVSYLLAGFGIVLSEDKQEVVELVKHHLWALEVCYI) are extracellular. Residues 368-388 (SALVLSCSLTFLVLMRSLVTH) form a helical membrane-spanning segment. Residues 389 to 422 (RTNLRALHRGAALDSSPLHRSPHPSRRAIFCWMS) are Cytoplasmic-facing. The helical transmembrane segment at 423–443 (FSAYQTAFICLGLLVQQIIFF) threads the bilayer. Topologically, residues 444 to 473 (LGTTALAFLVLMPVLHGRNLLLFRSLESSW) are extracellular. The chain crosses the membrane as a helical span at residues 474–494 (PFWLTLALAVILQSMAAHWVF). Over 495 to 509 (LETHDGHPQLTNRRV) the chain is Cytoplasmic. An intramembrane region (helical) is located at residues 510-547 (LYAATFLLFPLNVLVGAMVATWRVLLSALYNAIHLGQM). Residues 548–667 (DLSLLPPRAA…ALLGANGAQP (120 aa)) lie on the Cytoplasmic side of the membrane. The residue at position 643 (Y643) is a Phosphotyrosine.

As to quaternary structure, homodimer. Interacts with JAK2 and STAT5. Interacts (via extracellular domains) with RBP4. Interacts (via cytoplasmic domains) with RBP1. Phosphorylated on tyrosine residues in response to RBP4 binding. Phosphorylation requires the presence of LRAT, suggesting it may be triggered by the uptake of retinol that is then metabolized within the cell to retinoids that function as signaling molecules.

The protein localises to the cell membrane. Its function is as follows. Functions as a retinol transporter. Accepts all-trans retinol from the extracellular retinol-binding protein RBP4, facilitates retinol transport across the cell membrane, and then transfers retinol to the cytoplasmic retinol-binding protein RBP1. Retinol uptake is enhanced by LRAT, an enzyme that converts retinol to all-trans retinyl esters, the storage forms of vitamin A. Contributes to the activation of a signaling cascade that depends on retinol transport and LRAT-dependent generation of retinol metabolites that then trigger activation of JAK2 and its target STAT5, and ultimately increase the expression of SOCS3 and inhibit cellular responses to insulin. Important for the homeostasis of vitamin A and its derivatives, such as retinoic acid. STRA6-mediated transport is particularly important in the eye, and under conditions of dietary vitamin A deficiency. Does not transport retinoic acid. The protein is Receptor for retinol uptake STRA6 (STRA6) of Pongo abelii (Sumatran orangutan).